The following is a 394-amino-acid chain: Flagellin B (394 aa).

The protein belongs to the bacterial flagellin family.

It localises to the secreted. It is found in the bacterial flagellum. In terms of biological role, flagellin is the subunit protein which polymerizes to form the filaments of bacterial flagella. The protein is Flagellin B (flaB) of Rhizobium meliloti (strain 1021) (Ensifer meliloti).